A 368-amino-acid polypeptide reads, in one-letter code: D-amino-acid oxidase (368 aa).

Residues alanine 11, serine 14, lysine 35, histidine 36, cysteine 46, serine 47, glycine 51, asparagine 53, and phenylalanine 174 each coordinate FAD. Cysteine 230 and cysteine 285 form a disulfide bridge. Residues tyrosine 244, tyrosine 260, and arginine 308 each coordinate (R)-lactate. Anthranilate is bound by residues tyrosine 244, tyrosine 260, and arginine 308. Residues arginine 308, glycine 334, glycine 337, tyrosine 338, and glutamine 339 each coordinate FAD. The Microbody targeting signal motif lies at alanine 366–leucine 368.

This sequence belongs to the DAMOX/DASOX family. Homotetramer. The cofactor is FAD. In terms of processing, the disulfide bond might contribute to the high thermal stability of the protein.

The protein localises to the peroxisome matrix. It catalyses the reaction a D-alpha-amino acid + O2 + H2O = a 2-oxocarboxylate + H2O2 + NH4(+). It carries out the reaction D-alanine + O2 + H2O = pyruvate + H2O2 + NH4(+). The enzyme catalyses D-glutamate + O2 + H2O = H2O2 + 2-oxoglutarate + NH4(+). The catalysed reaction is D-serine + O2 + H2O = 3-hydroxypyruvate + H2O2 + NH4(+). It catalyses the reaction D-phenylalanine + O2 + H2O = 3-phenylpyruvate + H2O2 + NH4(+). It carries out the reaction D-arginine + O2 + H2O = 5-guanidino-2-oxopentanoate + H2O2 + NH4(+). The enzyme catalyses D-methionine + O2 + H2O = 4-methylsulfanyl-2-oxobutanoate + H2O2 + NH4(+). The catalysed reaction is D-leucine + O2 + H2O = 4-methyl-2-oxopentanoate + H2O2 + NH4(+). It catalyses the reaction D-lysine + O2 + H2O = 6-amino-2-oxohexanoate + H2O2 + NH4(+). It carries out the reaction D-valine + O2 + H2O = 3-methyl-2-oxobutanoate + H2O2 + NH4(+). The enzyme catalyses D-histidine + O2 + H2O = 3-(imidazol-5-yl)pyruvate + H2O2 + NH4(+). The catalysed reaction is D-glutamine + O2 + H2O = 2-oxoglutaramate + H2O2 + NH4(+). It catalyses the reaction D-isoleucine + O2 + H2O = (R)-3-methyl-2-oxopentanoate + H2O2 + NH4(+). It carries out the reaction D-allo-isoleucine + O2 + H2O = (S)-3-methyl-2-oxopentanoate + H2O2 + NH4(+). The enzyme catalyses D-threonine + O2 + H2O = (S)-3-hydroxy-2-oxobutanoate + H2O2 + NH4(+). The catalysed reaction is D-asparagine + O2 + H2O = 2-oxosuccinamate + H2O2 + NH4(+). It catalyses the reaction D-tryptophan + O2 + H2O = indole-3-pyruvate + H2O2 + NH4(+). It carries out the reaction D-tyrosine + O2 + H2O = 3-(4-hydroxyphenyl)pyruvate + H2O2 + NH4(+). Partially inhibited by benzoate, crotonate, and D-malate. In terms of biological role, catalyzes the oxidative deamination of D-amino acids with broad substrate specificity. Enables the organism to utilize D-amino acids as a source of nutrients. Unusually, has high activity on D-glutamate. The polypeptide is D-amino-acid oxidase (Talaromyces emersonii (Thermophilic fungus)).